Reading from the N-terminus, the 370-residue chain is Phosphate-binding protein PstS 3 (370 aa).

Positions 1 to 22 (MKLNRFGAAVGVLAAGALVLSA) are cleaved as a signal peptide. Cysteine 23 carries the N-palmitoyl cysteine lipid modification. Cysteine 23 carries the S-diacylglycerol cysteine lipid modification. Phosphate contacts are provided by residues 56–58 (STA), serine 86, aspartate 104, and 191–193 (SGT).

It belongs to the PstS family. In terms of assembly, the complex is composed of two ATP-binding proteins (PstB), two transmembrane proteins (PstC and PstA) and a solute-binding protein (PstS).

It is found in the cell membrane. Part of the ABC transporter complex PstSACB involved in phosphate import. In Mycobacterium bovis (strain ATCC BAA-935 / AF2122/97), this protein is Phosphate-binding protein PstS 3 (pstS3).